The following is a 417-amino-acid chain: GPI mannosyltransferase 2 (417 aa).

9 helical membrane-spanning segments follow: residues 10 to 30 (FLII…LVWL), 104 to 124 (IVLK…WIVY), 142 to 162 (LALT…LISV), 167 to 187 (IAFT…SFDV), 206 to 226 (FCFA…LFYV), 239 to 259 (ITSI…FVYF), 312 to 332 (IPNF…ITYF), 344 to 364 (YIWI…VQII), and 394 to 414 (YYVM…ACFL).

Belongs to the PIGV family.

The protein localises to the endoplasmic reticulum membrane. Its pathway is glycolipid biosynthesis; glycosylphosphatidylinositol-anchor biosynthesis. Functionally, mannosyltransferase involved in glycosylphosphatidylinositol-anchor biosynthesis. Transfers the second mannose to the glycosylphosphatidylinositol during GPI precursor assembly. The sequence is that of GPI mannosyltransferase 2 (GPI18) from Kluyveromyces lactis (strain ATCC 8585 / CBS 2359 / DSM 70799 / NBRC 1267 / NRRL Y-1140 / WM37) (Yeast).